The chain runs to 465 residues: UDP-glycosyltransferase 89A2 (465 aa).

Residues Ser-291, 342–344, 359–367, and 381–384 each bind UDP-alpha-D-glucose; these read VSQ, HCGWNSVLE, and EADQ.

Belongs to the UDP-glycosyltransferase family.

Its function is as follows. Glucosyltransferase that glucosylates benzoates and benzoate derivatives in vitro. This chain is UDP-glycosyltransferase 89A2 (UGT89A2), found in Arabidopsis thaliana (Mouse-ear cress).